Reading from the N-terminus, the 104-residue chain is Pyrimidine/purine nucleoside phosphorylase (104 aa).

Belongs to the nucleoside phosphorylase PpnP family.

It catalyses the reaction a purine D-ribonucleoside + phosphate = a purine nucleobase + alpha-D-ribose 1-phosphate. The enzyme catalyses adenosine + phosphate = alpha-D-ribose 1-phosphate + adenine. It carries out the reaction cytidine + phosphate = cytosine + alpha-D-ribose 1-phosphate. The catalysed reaction is guanosine + phosphate = alpha-D-ribose 1-phosphate + guanine. It catalyses the reaction inosine + phosphate = alpha-D-ribose 1-phosphate + hypoxanthine. The enzyme catalyses thymidine + phosphate = 2-deoxy-alpha-D-ribose 1-phosphate + thymine. It carries out the reaction uridine + phosphate = alpha-D-ribose 1-phosphate + uracil. The catalysed reaction is xanthosine + phosphate = alpha-D-ribose 1-phosphate + xanthine. Its function is as follows. Catalyzes the phosphorolysis of diverse nucleosides, yielding D-ribose 1-phosphate and the respective free bases. Can use uridine, adenosine, guanosine, cytidine, thymidine, inosine and xanthosine as substrates. Also catalyzes the reverse reactions. The chain is Pyrimidine/purine nucleoside phosphorylase from Pelobacter propionicus (strain DSM 2379 / NBRC 103807 / OttBd1).